The primary structure comprises 711 residues: Zinc finger protein 175 (711 aa).

The segment covering 1 to 11 (MPADVNLSQKP) has biased composition (polar residues). The segment at 1 to 21 (MPADVNLSQKPQVLGPEKQDG) is disordered. The 72-residue stretch at 27 to 98 (VSFEDVTVDF…EAEVSHQRCQ (72 aa)) folds into the KRAB domain. The segment at 279 to 301 (DGCSECGGSFTQKSHLFAQQRIH) adopts a C2H2-type 1; atypical zinc-finger fold. The C2H2-type 2; atypical zinc-finger motif lies at 307–329 (HECGKCGKAFMPQLKLSVYLTDH). Residues 335 to 357 (CICKECGKVFIQRSELLTHQKTH) form a C2H2-type 3 zinc finger. The Nuclear localization signal signature appears at 359 to 362 (RKKP). 12 consecutive C2H2-type zinc fingers follow at residues 363–385 (YKCH…QRTH), 391–413 (YECS…QKIH), 419–441 (YACS…QRIH), 447–469 (YVCI…QRSH), 475–497 (YQCH…HRIH), 503–525 (YECS…QKIH), 531–553 (HVCS…QRIH), 559–581 (YKCS…QRIH), 587–609 (YVCT…QITH), 615–637 (FVCY…QRTH), 643–665 (YECL…QRIH), and 671–693 (YVCS…QTTH).

The protein belongs to the krueppel C2H2-type zinc-finger protein family. As to expression, ubiquitous.

Its subcellular location is the cytoplasm. It localises to the nucleus. Functionally, down-regulates the expression of several chemokine receptors. Interferes with HIV-1 replication by suppressing Tat-induced viral LTR promoter activity. The protein is Zinc finger protein 175 (ZNF175) of Homo sapiens (Human).